A 267-amino-acid polypeptide reads, in one-letter code: Expansin-B10 (267 aa).

A signal peptide spans 1 to 22 (MASSCLLLACVVAAAMVSAVSC). N-linked (GlcNAc...) asparagine glycosylation is present at Asn32. In terms of domain architecture, Expansin-like EG45 spans 61–167 (GGACGYKDID…RRVRCKYPGE (107 aa)). Intrachain disulfides connect Cys64–Cys92, Cys95–Cys162, and Cys100–Cys106. The Expansin-like CBD domain maps to 181-262 (NYFAVLVKYV…NWKANALYKS (82 aa)). Asn213 is a glycosylation site (N-linked (GlcNAc...) asparagine).

The protein belongs to the expansin family. Expansin B subfamily.

It localises to the secreted. The protein resides in the cell wall. It is found in the membrane. In terms of biological role, may cause loosening and extension of plant cell walls by disrupting non-covalent bonding between cellulose microfibrils and matrix glucans. No enzymatic activity has been found. May be required for rapid internodal elongation in deepwater rice during submergence. The polypeptide is Expansin-B10 (EXPB10) (Oryza sativa subsp. japonica (Rice)).